The primary structure comprises 196 residues: Nucleoid occlusion factor SlmA (196 aa).

The region spanning 7–68 (TNRREEILQA…GLIEFIEDSI (62 aa)) is the HTH tetR-type domain. A DNA-binding region (H-T-H motif) is located at residues 31 to 50 (TTAKLAAQVGVSEAALYRHF). A coiled-coil region spans residues 115 to 142 (EQDRLQSRINQLFERIETQLRQVLRERK).

Belongs to the nucleoid occlusion factor SlmA family. Homodimer. Interacts with FtsZ.

The protein resides in the cytoplasm. The protein localises to the nucleoid. Required for nucleoid occlusion (NO) phenomenon, which prevents Z-ring formation and cell division over the nucleoid. Acts as a DNA-associated cell division inhibitor that binds simultaneously chromosomal DNA and FtsZ, and disrupts the assembly of FtsZ polymers. SlmA-DNA-binding sequences (SBS) are dispersed on non-Ter regions of the chromosome, preventing FtsZ polymerization at these regions. The polypeptide is Nucleoid occlusion factor SlmA (Photobacterium profundum (strain SS9)).